The chain runs to 89 residues: MALTTEEKKQVLSEYGLHETDTGSPEAQVAMLTKRIVDLTEHLKMHKHDHHSRRGLLLLVGRRRRLLKYVQKVDIARYRSLIERLGLRR.

A compositionally biased stretch (basic and acidic residues) spans 1 to 21; that stretch reads MALTTEEKKQVLSEYGLHETD. The tract at residues 1–24 is disordered; it reads MALTTEEKKQVLSEYGLHETDTGS.

It belongs to the universal ribosomal protein uS15 family. In terms of assembly, part of the 30S ribosomal subunit. Forms a bridge to the 50S subunit in the 70S ribosome, contacting the 23S rRNA.

Functionally, one of the primary rRNA binding proteins, it binds directly to 16S rRNA where it helps nucleate assembly of the platform of the 30S subunit by binding and bridging several RNA helices of the 16S rRNA. Forms an intersubunit bridge (bridge B4) with the 23S rRNA of the 50S subunit in the ribosome. The sequence is that of Small ribosomal subunit protein uS15 from Rhodococcus opacus (strain B4).